We begin with the raw amino-acid sequence, 258 residues long: Global transcriptional regulator CodY (258 aa).

The segment at 1 to 156 (MSSLLSKTRR…SATIVGMEML (156 aa)) is GAF domain. A DNA-binding region (H-T-H motif) is located at residues 204 to 223 (ASKIADKVGITRSVIVNALR).

The protein belongs to the CodY family.

The protein resides in the cytoplasm. DNA-binding global transcriptional regulator which is involved in the adaptive response to starvation and acts by directly or indirectly controlling the expression of numerous genes in response to nutrient availability. During rapid exponential growth, CodY is highly active and represses genes whose products allow adaptation to nutrient depletion. The protein is Global transcriptional regulator CodY of Clostridium botulinum (strain Alaska E43 / Type E3).